The chain runs to 262 residues: Small ribosomal subunit protein uS2 (262 aa).

The protein belongs to the universal ribosomal protein uS2 family.

This is Small ribosomal subunit protein uS2 from Azobacteroides pseudotrichonymphae genomovar. CFP2.